The primary structure comprises 375 residues: GTPase HflX (375 aa).

Residues 194-371 (PHIAIVGYAS…RIATLLAGTK (178 aa)) form the Hflx-type G domain. GTP contacts are provided by residues 200-207 (GYASAGKT), 225-229 (FTTIT), 246-249 (DTVG), 314-317 (NKID), and 349-351 (SAK). Thr-207 and Thr-227 together coordinate Mg(2+).

Belongs to the TRAFAC class OBG-HflX-like GTPase superfamily. HflX GTPase family. Monomer. Associates with the 50S ribosomal subunit. The cofactor is Mg(2+).

The protein localises to the cytoplasm. Functionally, GTPase that associates with the 50S ribosomal subunit and may have a role during protein synthesis or ribosome biogenesis. This is GTPase HflX from Hyperthermus butylicus (strain DSM 5456 / JCM 9403 / PLM1-5).